We begin with the raw amino-acid sequence, 144 residues long: 3-hydroxyacyl-[acyl-carrier-protein] dehydratase FabZ (144 aa).

His-48 is a catalytic residue.

Belongs to the thioester dehydratase family. FabZ subfamily.

It localises to the cytoplasm. The enzyme catalyses a (3R)-hydroxyacyl-[ACP] = a (2E)-enoyl-[ACP] + H2O. In terms of biological role, involved in unsaturated fatty acids biosynthesis. Catalyzes the dehydration of short chain beta-hydroxyacyl-ACPs and long chain saturated and unsaturated beta-hydroxyacyl-ACPs. This chain is 3-hydroxyacyl-[acyl-carrier-protein] dehydratase FabZ, found in Listeria innocua serovar 6a (strain ATCC BAA-680 / CLIP 11262).